The chain runs to 374 residues: Pulmonary surfactant-associated protein D (374 aa).

The signal sequence occupies residues 1–19 (MLPFLSMLVLLVQPLGNLG). S-nitrosocysteine occurs at positions 34 and 39. A disordered region spans residues 38 to 222 (MCSPTENGLP…GIKGESGLPD (185 aa)). One can recognise a Collagen-like domain in the interval 45 to 221 (GLPGRDGRDG…RGIKGESGLP (177 aa)). Residues 49-64 (RDGRDGREGPRGEKGD) show a composition bias toward basic and acidic residues. The segment covering 70-79 (PMGLSGLQGP) has biased composition (low complexity). N-linked (GlcNAc...) asparagine glycosylation occurs at Asn-89. Composition is skewed to low complexity over residues 137-149 (KGEA…VGAP) and 169-200 (APGV…RGPP). The segment covering 203-215 (KGDRGVPGDRGIK) has biased composition (basic and acidic residues). A coiled-coil region spans residues 222–253 (DSAALRQQMEALKGKLQRLEVAFSHYQKAALF). In terms of domain architecture, C-type lectin spans 259–374 (VGDKIFRTAD…GEQRLVICEF (116 aa)). Cystine bridges form between Cys-280–Cys-372 and Cys-350–Cys-364.

This sequence belongs to the SFTPD family. As to quaternary structure, oligomeric complex of 4 set of homotrimers. Post-translationally, S-nitrosylation at Cys-34 and Cys-39 alters the quaternary structure which results in a pro-inflammatory chemoattractive signaling activity with macrophages.

The protein resides in the secreted. It is found in the extracellular space. The protein localises to the extracellular matrix. Its subcellular location is the surface film. In terms of biological role, contributes to the lung's defense against inhaled microorganisms, organic antigens and toxins. Interacts with compounds such as bacterial lipopolysaccharides, oligosaccharides and fatty acids and modulates leukocyte action in immune response. May participate in the extracellular reorganization or turnover of pulmonary surfactant. Binds strongly maltose residues and to a lesser extent other alpha-glucosyl moieties. The polypeptide is Pulmonary surfactant-associated protein D (Sftpd) (Mus musculus (Mouse)).